The following is a 315-amino-acid chain: Protein ORANGE-LIKE, chloroplastic (315 aa).

The N-terminal 16 residues, 1-16 (MTCFSSATPHRHHLLL), are a transit peptide targeting the chloroplast. 2 helical membrane-spanning segments follow: residues 155–175 (LYST…LIAP) and 207–227 (IVAS…LIEV). A CR-type zinc finger spans residues 225 to 307 (IEVNNVKQQE…CTGMVTASEH (83 aa)). Residues 238–245 (CKYCLGTG) form a CXXCXGXG motif repeat. The stretch at 249–256 (CARCSASG) is one CXXCXXXG motif repeat. The stretch at 282-289 (CLNCSGAG) is one CXXCXGXG motif repeat. One copy of the CXXCXXXG motif repeat lies at 293–300 (CPTCLCTG).

Belongs to the orange-like family. In terms of assembly, interacts with PSY1.

Its subcellular location is the plastid. It localises to the chloroplast membrane. In terms of biological role, may be associated with accumulation of carotenoids in chromoplasts. This chain is Protein ORANGE-LIKE, chloroplastic (ORLIKE), found in Arabidopsis thaliana (Mouse-ear cress).